The following is a 211-amino-acid chain: Large ribosomal subunit protein uL3 (211 aa).

Glutamine 150 is modified (N5-methylglutamine).

The protein belongs to the universal ribosomal protein uL3 family. Part of the 50S ribosomal subunit. Forms a cluster with proteins L14 and L19. Methylated by PrmB.

One of the primary rRNA binding proteins, it binds directly near the 3'-end of the 23S rRNA, where it nucleates assembly of the 50S subunit. In Stutzerimonas stutzeri (strain A1501) (Pseudomonas stutzeri), this protein is Large ribosomal subunit protein uL3.